A 775-amino-acid chain; its full sequence is MVKSQRNGKKGAKVLSRKEKRQSEKEEMDSLRQRIEEYNPEVDEASIKHFSDLPITQNTLRGLKECSFVSLTDIQKKSIPVALKGEDLMGTARTGSGKTLAFLIPVIEILLRNDITEYDGLAALIVSPTRELAVQIFEVLAKIGKYNSFSAGLVTGGKDVQYEKERISRMNILVGTPGRISQHLNESVGMETSNLQVLVLDEADRCLDMGFRKQIDNILNHLPRTRQTLLFSATHTDSVQDLARLSLTNPKRIGTSSDQDISAIPESLDQYYVKVPLNEKLDVLWSFIKSHLKSKILVFFSSSKQVQYAYETFRTLQPGIPLMKLYGRHKQTSRLETTVKFSQAQHACLFATDIVARGLDFPAIDWVIQVDCPEDVATYVHRVGRSARFGRQGKSLLMLLPTEEDGMLKRMKVHKIEPKMMNIKEKSKKSIRPQLQSLCFKDPVIKNLGQRAFIAYFRSVYIQKDKDIFKVDELPVEEYAASLGLPGAPKIKIKGGEINKEKKNQSRKLLQLSKADENGELKEDDDKPAKVRTKYDRIFDRKNQTILSEHYLNMTKSAHGGKDDDEDEDFMTVKRQDHELVDDELPDLLLPVSKRQAKKALSRKATLASKGNPTKLKFDDDGVPHAIYELEGEEDFEKAGDAKQQKMEFVQKEQEAMKITDLADREVERQKRQEKKRKRKEIERRIREEEWDDGSGMDGEDLPDLERDMEPTEAKPKRTSNWFDDDDDDNDGGDEKHGNGKPPVKKAKSDSKYVEFEEPETLEDLESLAATLIGN.

Over residues 1–12 the composition is skewed to basic residues; it reads MVKSQRNGKKGA. The tract at residues 1 to 30 is disordered; that stretch reads MVKSQRNGKKGAKVLSRKEKRQSEKEEMDS. Basic and acidic residues predominate over residues 21–30; it reads RQSEKEEMDS. The Q motif motif lies at 48 to 76; the sequence is KHFSDLPITQNTLRGLKECSFVSLTDIQK. Residues 79 to 253 enclose the Helicase ATP-binding domain; that stretch reads IPVALKGEDL…RLSLTNPKRI (175 aa). 92–99 is an ATP binding site; it reads ARTGSGKT. Residues 201–204 carry the DEAD box motif; it reads DEAD. A Helicase C-terminal domain is found at 267–439; sequence SLDQYYVKVP…SIRPQLQSLC (173 aa). The segment at 633–760 is disordered; that stretch reads EEDFEKAGDA…SKYVEFEEPE (128 aa). Over residues 637–671 the composition is skewed to basic and acidic residues; the sequence is EKAGDAKQQKMEFVQKEQEAMKITDLADREVERQK. Acidic residues predominate over residues 689-703; it reads EEWDDGSGMDGEDLP. A compositionally biased stretch (basic and acidic residues) spans 704 to 716; it reads DLERDMEPTEAKP. The segment covering 723-732 has biased composition (acidic residues); it reads FDDDDDDNDG.

This sequence belongs to the DEAD box helicase family. DDX10/DBP4 subfamily. In terms of assembly, interacts with the U3 and U14 snoRNAs. Associates with pre-ribosomal complexes.

Its subcellular location is the nucleus. It localises to the nucleolus. It carries out the reaction ATP + H2O = ADP + phosphate + H(+). ATP-dependent RNA helicase required for ribosome biogenesis. Involved in the release of U14 snoRNA in pre-ribosomal complexes. Required for pre-rRNA cleavage at site A2. This is ATP-dependent RNA helicase DBP4 (DBP4) from Lodderomyces elongisporus (strain ATCC 11503 / CBS 2605 / JCM 1781 / NBRC 1676 / NRRL YB-4239) (Yeast).